The chain runs to 670 residues: Solute carrier organic anion transporter family member 1A5 (670 aa).

The Cytoplasmic segment spans residues 1-20; that stretch reads MGETEKRVATHEVRCFSKIK. A helical membrane pass occupies residues 21-40; it reads MFLLALTWAYVSKSLSGIYM. Over 41 to 59 the chain is Extracellular; that stretch reads NTMLTQIERQFDIPTSIVG. A helical membrane pass occupies residues 60–80; sequence FINGSFEIGNLLLIIFVSYFG. The Cytoplasmic segment spans residues 81 to 86; that stretch reads TKLHRP. The chain crosses the membrane as a helical span at residues 87-111; that stretch reads IMIGVGCVIMGLGCFLMSLPHFLMG. Residues 112-155 are Extracellular-facing; it reads RYEYETTISPTSNLSSNSFLCMENRSQTLKPTQDPAECIKEMKS. 2 N-linked (GlcNAc...) asparagine glycosylation sites follow: asparagine 124 and asparagine 135. A helical membrane pass occupies residues 156–184; the sequence is LMWIYVLVGNIIRGIGETPIMPLGISYIE. Topologically, residues 185-203 are cytoplasmic; the sequence is DFAKSENSPLYIGILETGK. Residues 204-224 form a helical membrane-spanning segment; that stretch reads VFGPIVGLLLGSFCASIYVDT. At 225-242 the chain is on the extracellular side; the sequence is GSVNTDDLTITPTDTRWV. The helical transmembrane segment at 243–267 threads the bilayer; sequence GAWWIGFLICAGVNILSSIPFFFFP. Topologically, residues 268–311 are cytoplasmic; that stretch reads KTLPKEGLQDDVDGTNNDKEEKHREKAKEENRGITKDFLPFMKS. A helical membrane pass occupies residues 312-333; sequence LSCNPIYMLLILTSVLQINAFI. Residues 334–353 lie on the Extracellular side of the membrane; it reads NMFTFLPKYLEQQYGKSTAE. Residues 354–377 traverse the membrane as a helical segment; the sequence is VVLLIGVYNLPPICIGYLLIGFIM. Over 378–381 the chain is Cytoplasmic; it reads KKFK. The helical transmembrane segment at 382 to 405 threads the bilayer; the sequence is ITVKKAAYMAFCLSLFEYLLYFLH. The Extracellular segment spans residues 406-513; sequence FMITCDNFPV…PECANKLQYF (108 aa). The region spanning 433 to 488 is the Kazal-like domain; it reads NKVLADCNRGCSCSTNSWDPVCGDNGLAYMSACLAGCKKSVGTGTNMVFQNCSCIR. 3 cysteine pairs are disulfide-bonded: cysteine 439–cysteine 469, cysteine 445–cysteine 465, and cysteine 454–cysteine 486. N-linked (GlcNAc...) asparagine glycosylation is found at asparagine 483 and asparagine 492. A helical membrane pass occupies residues 514-536; sequence LIMSVIGSFIYSITAIPGYMVLL. Topologically, residues 537–545 are cytoplasmic; sequence RCIKPEEKS. The chain crosses the membrane as a helical span at residues 546–571; sequence LGIGLHAFCTRVFAGIPAPIYFGALI. Residues 572-605 lie on the Extracellular side of the membrane; sequence DRTCLHWGTLKCGEPGACRMYNINNFRRIYLVLP. The helical transmembrane segment at 606 to 623 threads the bilayer; the sequence is AALRGSSYLPALFILILM. The Cytoplasmic portion of the chain corresponds to 624–670; that stretch reads RKFQFPGEIDSSETELAEMKITVKKSECTDVHGSPQVENDGELKTRL.

Belongs to the organo anion transporter (TC 2.A.60) family. Highly expressed in the kidney, moderately abundant in the retina, and even lower in the liver. Expressed (at protein level) in the small intestine. Expressed at lower levels in brain,lung, and retina.

The protein localises to the cell membrane. Its subcellular location is the basal cell membrane. The enzyme catalyses taurocholate(out) = taurocholate(in). It catalyses the reaction glycocholate(out) = glycocholate(in). The catalysed reaction is taurochenodeoxycholate(out) = taurochenodeoxycholate(in). It carries out the reaction tauroursodeoxycholate(out) = tauroursodeoxycholate(in). The enzyme catalyses 3,3',5'-triiodo-L-thyronine(out) = 3,3',5'-triiodo-L-thyronine(in). It catalyses the reaction L-thyroxine(out) = L-thyroxine(in). The catalysed reaction is taurodeoxycholate(out) = taurodeoxycholate(in). It carries out the reaction glycodeoxycholate(out) = glycodeoxycholate(in). The enzyme catalyses glycochenodeoxycholate(out) = glycochenodeoxycholate(in). It catalyses the reaction glycoursodeoxycholate(out) = glycoursodeoxycholate(in). The catalysed reaction is estrone 3-sulfate(out) = estrone 3-sulfate(in). It carries out the reaction prostaglandin E2(out) = prostaglandin E2(in). The enzyme catalyses substance P(out) = substance P(in). Its function is as follows. Na(+)-independent transporter that mediates the cellular uptake of a broad range of organic anions such as the endogenous bile salts cholate and deoxycholate, either in their unconjugated or conjugated forms (taurocholate and glycocholate), estrone 3-sulfate and prostaglandin E2, at the plasma membrane. Responsible for intestinal absorption of bile acids. Capable of thyroid hormone transport (both T3 or 3,3',5'-triiodo-L-thyronine, and T4 or L-tyroxine). Plays roles in blood-brain and -cerebrospinal fluid barrier transport of organic anions and signal mediators, and in hormone uptake by neural cells. May also play a role in the reuptake of neuropeptides such as substance P/TAC1 and vasoactive intestinal peptide/VIP released from retinal neurons. Shows a pH-sensitive substrate specificity which may be ascribed to the protonation state of the binding site and leads to a stimulation of substrate transport in an acidic microenvironment. Hydrogencarbonate/HCO3(-) acts as the probable counteranion that exchanges for organic anions. May contribute to regulate the transport of organic compounds in testis across the blood-testis-barrier. This is Solute carrier organic anion transporter family member 1A5 (Slco1a5) from Rattus norvegicus (Rat).